We begin with the raw amino-acid sequence, 946 residues long: Bifunctional glutamine synthetase adenylyltransferase/adenylyl-removing enzyme (946 aa).

Residues 1-440 (MKPLSSPLQQ…VFNELIGDDE (440 aa)) are adenylyl removase. The adenylyl transferase stretch occupies residues 449–946 (SEQWRELWQD…ASWQKWLVEE (498 aa)).

Belongs to the GlnE family. It depends on Mg(2+) as a cofactor.

The enzyme catalyses [glutamine synthetase]-O(4)-(5'-adenylyl)-L-tyrosine + phosphate = [glutamine synthetase]-L-tyrosine + ADP. It carries out the reaction [glutamine synthetase]-L-tyrosine + ATP = [glutamine synthetase]-O(4)-(5'-adenylyl)-L-tyrosine + diphosphate. Its function is as follows. Involved in the regulation of glutamine synthetase GlnA, a key enzyme in the process to assimilate ammonia. When cellular nitrogen levels are high, the C-terminal adenylyl transferase (AT) inactivates GlnA by covalent transfer of an adenylyl group from ATP to specific tyrosine residue of GlnA, thus reducing its activity. Conversely, when nitrogen levels are low, the N-terminal adenylyl removase (AR) activates GlnA by removing the adenylyl group by phosphorolysis, increasing its activity. The regulatory region of GlnE binds the signal transduction protein PII (GlnB) which indicates the nitrogen status of the cell. The sequence is that of Bifunctional glutamine synthetase adenylyltransferase/adenylyl-removing enzyme from Shigella boydii serotype 18 (strain CDC 3083-94 / BS512).